Here is a 427-residue protein sequence, read N- to C-terminus: Enolase (427 aa).

Residue Gln-162 participates in (2R)-2-phosphoglycerate binding. The active-site Proton donor is Glu-204. Mg(2+) is bound by residues Asp-241, Glu-282, and Asp-309. Positions 334, 363, 364, and 385 each coordinate (2R)-2-phosphoglycerate. The Proton acceptor role is filled by Lys-334.

This sequence belongs to the enolase family. Requires Mg(2+) as cofactor.

It is found in the cytoplasm. The protein resides in the secreted. Its subcellular location is the cell surface. The catalysed reaction is (2R)-2-phosphoglycerate = phosphoenolpyruvate + H2O. It functions in the pathway carbohydrate degradation; glycolysis; pyruvate from D-glyceraldehyde 3-phosphate: step 4/5. In terms of biological role, catalyzes the reversible conversion of 2-phosphoglycerate (2-PG) into phosphoenolpyruvate (PEP). It is essential for the degradation of carbohydrates via glycolysis. The chain is Enolase from Frankia casuarinae (strain DSM 45818 / CECT 9043 / HFP020203 / CcI3).